Here is a 148-residue protein sequence, read N- to C-terminus: Glutamate mutase sigma subunit (148 aa).

Residues 3 to 140 (NPTIVIGVIG…KRDIERVMQS (138 aa)) form the B12-binding domain. Adenosylcob(III)alamin contacts are provided by residues 13-17 (ADCHA), histidine 16, 61-63 (SSI), and 93-97 (NLVIG).

The protein belongs to the methylaspartate mutase GlmS subunit family. As to quaternary structure, heterotetramer composed of 2 epsilon subunits (GlmE) and 2 sigma subunits (GlmS). GlmE exists as a homodimer and GlmS as a monomer. The cofactor is adenosylcob(III)alamin.

The enzyme catalyses (2S,3S)-3-methyl-L-aspartate = L-glutamate. It functions in the pathway amino-acid degradation; L-glutamate degradation via mesaconate pathway; acetate and pyruvate from L-glutamate: step 1/4. Functionally, catalyzes the carbon skeleton rearrangement of L-glutamate to L-threo-3-methylaspartate ((2S,3S)-3-methylaspartate). This is Glutamate mutase sigma subunit from Yersinia enterocolitica serotype O:8 / biotype 1B (strain NCTC 13174 / 8081).